The sequence spans 243 residues: Large ribosomal subunit protein uL2 (243 aa).

Over residues 1 to 12 (MGRRIQGQRRGR) the composition is skewed to basic residues. Disordered regions lie at residues 1–38 (MGRR…SDDT) and 198–243 (VDHP…GSSE). Composition is skewed to basic and acidic residues over residues 24–34 (YKAELSHKQSE) and 221–231 (PPGRKVGDIAS).

This sequence belongs to the universal ribosomal protein uL2 family. As to quaternary structure, part of the 50S ribosomal subunit. Forms a bridge to the 30S subunit in the 70S ribosome.

In terms of biological role, one of the primary rRNA binding proteins. Required for association of the 30S and 50S subunits to form the 70S ribosome, for tRNA binding and peptide bond formation. It has been suggested to have peptidyltransferase activity; this is somewhat controversial. Makes several contacts with the 16S rRNA in the 70S ribosome. The chain is Large ribosomal subunit protein uL2 from Haloquadratum walsbyi (strain DSM 16790 / HBSQ001).